A 485-amino-acid chain; its full sequence is MLTLSTIDMLLAINEGQLIEEVIITLLASPQLAVFFEKHPRLKKALLKDIYQWKKSLQEKVKETLVPTIIADEFALYQQTQSLCNAVFNQQVDNILTELNQLDSSFVIEATQLIKTNKPFSPAQQALFIQRWRISLIFQVTTLHKALFEQEQEQLLAELQERLALSGSLSNTFSENERAAGRLWDMSKGVITKTPYDEKIIQRYSDFLNQQPELHKLASLLGRSKTAKSLPEESVIFESITIVEKAPDTTPEQVNGIGLSDDILRLLPAELALLGINEVEYEFYRKLIEKQLNTYRLQGDSWQERTVLRPVTHHLDEERPRGPFIICIDTSGSMGGFNEQCAKAFGLALMKIALADNRACHVMLFSTEMIHYQLSSSDGLQELVKFLNQTFRGGTDLASCLNEVADKLNTPTWKDADAVVISDFVAQRLPENLINKIKKVQQQQHNRFHAVTLSNYGKPSIMKIFDHIWRFDTGLKSRLLRRWRQ.

It belongs to the ViaA family. Homodimer. Interacts with RavA.

It localises to the cytoplasm. Component of the RavA-ViaA chaperone complex, which may act on the membrane to optimize the function of some of the respiratory chains. ViaA stimulates the ATPase activity of RavA. This Proteus mirabilis (strain HI4320) protein is Regulatory protein ViaA.